Consider the following 125-residue polypeptide: uncharacterized protein (125 aa).

In terms of domain architecture, PRD spans 15 to 121; that stretch reads QINQSIIDVI…HSLVLEQKQL (107 aa).

This is an uncharacterized protein from Haemophilus influenzae (strain ATCC 51907 / DSM 11121 / KW20 / Rd).